Here is a 297-residue protein sequence, read N- to C-terminus: PIH1 domain-containing protein 1 (297 aa).

The protein belongs to the PIH1 family.

Its subcellular location is the nucleus. In terms of biological role, involved in the assembly of C/D box small nucleolar ribonucleoprotein (snoRNP) particles. Recruits the SWI/SNF complex to the core promoter of rRNA genes and enhances pre-rRNA transcription. Mediates interaction of TELO2 with the R2TP complex which is necessary for the stability of MTOR and SMG1. Positively regulates the assembly and activity of the mTORC1 complex. The protein is PIH1 domain-containing protein 1 (pih1d1) of Xenopus laevis (African clawed frog).